Reading from the N-terminus, the 136-residue chain is ATP synthase epsilon chain (136 aa).

This sequence belongs to the ATPase epsilon chain family. As to quaternary structure, F-type ATPases have 2 components, CF(1) - the catalytic core - and CF(0) - the membrane proton channel. CF(1) has five subunits: alpha(3), beta(3), gamma(1), delta(1), epsilon(1). CF(0) has three main subunits: a, b and c.

Its subcellular location is the cellular thylakoid membrane. Its function is as follows. Produces ATP from ADP in the presence of a proton gradient across the membrane. The sequence is that of ATP synthase epsilon chain from Parasynechococcus marenigrum (strain WH8102).